A 301-amino-acid polypeptide reads, in one-letter code: Acetyl-coenzyme A carboxylase carboxyl transferase subunit beta (301 aa).

Residues 23–292 form the CoA carboxyltransferase N-terminal domain; the sequence is VWTKCDSCGQ…PSPDEPRESV (270 aa). Residues C27, C30, C46, and C49 each coordinate Zn(2+). The segment at 27 to 49 adopts a C4-type zinc-finger fold; sequence CDSCGQVLYRAELERNLEVCPKC. Positions 280 to 301 are disordered; it reads LPAPSPDEPRESVVVPDQEPEA.

This sequence belongs to the AccD/PCCB family. Acetyl-CoA carboxylase is a heterohexamer composed of biotin carboxyl carrier protein (AccB), biotin carboxylase (AccC) and two subunits each of ACCase subunit alpha (AccA) and ACCase subunit beta (AccD). Zn(2+) serves as cofactor.

The protein resides in the cytoplasm. It carries out the reaction N(6)-carboxybiotinyl-L-lysyl-[protein] + acetyl-CoA = N(6)-biotinyl-L-lysyl-[protein] + malonyl-CoA. The protein operates within lipid metabolism; malonyl-CoA biosynthesis; malonyl-CoA from acetyl-CoA: step 1/1. Functionally, component of the acetyl coenzyme A carboxylase (ACC) complex. Biotin carboxylase (BC) catalyzes the carboxylation of biotin on its carrier protein (BCCP) and then the CO(2) group is transferred by the transcarboxylase to acetyl-CoA to form malonyl-CoA. The sequence is that of Acetyl-coenzyme A carboxylase carboxyl transferase subunit beta from Enterobacter sp. (strain 638).